A 131-amino-acid polypeptide reads, in one-letter code: SPbeta prophage-derived UPF0715 membrane protein YopD (131 aa).

The next 4 helical transmembrane spans lie at 12-32 (VYTL…YLFV), 38-58 (AIAL…YLVF), 75-95 (LINF…FWFV), and 108-128 (FEYY…DSIF).

Belongs to the UPF0715 family.

The protein localises to the cell membrane. The polypeptide is SPbeta prophage-derived UPF0715 membrane protein YopD (yopD) (Bacillus subtilis (strain 168)).